Here is a 253-residue protein sequence, read N- to C-terminus: Probable transcriptional regulatory protein slr0989 (253 aa).

Positions 1–22 are disordered; it reads MGGRKWQSIKRQKARVDAQKGK.

The protein belongs to the TACO1 family.

The protein resides in the cytoplasm. This Synechocystis sp. (strain ATCC 27184 / PCC 6803 / Kazusa) protein is Probable transcriptional regulatory protein slr0989.